The chain runs to 245 residues: Folate receptor gamma (245 aa).

Positions 1 to 22 (MDMAWQMMQLLLLALVTAAGSA) are cleaved as a signal peptide. Intrachain disulfides connect cysteine 37/cysteine 65, cysteine 57/cysteine 105, cysteine 66/cysteine 109, cysteine 89/cysteine 175, cysteine 96/cysteine 146, cysteine 135/cysteine 209, cysteine 139/cysteine 189, and cysteine 152/cysteine 169. Residues aspartate 103 and tyrosine 107 each contribute to the folate site. N-linked (GlcNAc...) asparagine glycosylation occurs at asparagine 121. Residues 124 to 128 (WRKER), 157 to 162 (HKGWNW), and serine 196 contribute to the folate site. Asparagine 161 carries an N-linked (GlcNAc...) asparagine glycan. Asparagine 201 carries an N-linked (GlcNAc...) asparagine glycan.

Belongs to the folate receptor family. As to expression, spleen, thymus, bone marrow, ovarian carcinoma, and uterine carcinoma.

The protein localises to the secreted. Binds to folate and reduced folic acid derivatives and mediates delivery of 5-methyltetrahydrofolate to the interior of cells. Isoform Short does not bind folate. The chain is Folate receptor gamma (FOLR3) from Homo sapiens (Human).